Consider the following 39-residue polypeptide: SYSMEHFRWGKPVGKKRRPVKVYPNGAENESAEAFPVEV.

Serine 1 bears the N-acetylserine mark. The residue at position 13 (valine 13) is a Valine amide. Serine 31 is subject to Phosphoserine.

It belongs to the POMC family. Expressed in the pituitary gland.

Its subcellular location is the secreted. Its function is as follows. Precursor protein for pituitary hormones that regulate stress and environmental adaptation. In terms of biological role, stimulates the adrenal glands to release cortisol. Anorexigenic peptide. Increases the pigmentation of skin by increasing melanin production in melanocytes. The protein is Pro-opiomelanocortin (POMC) of Oryctolagus cuniculus (Rabbit).